We begin with the raw amino-acid sequence, 548 residues long: Chaperonin GroEL (548 aa).

Residues Thr30–Pro33, Lys51, Asp87–Thr91, Gly415, Asn479–Ala481, and Asp495 each bind ATP.

This sequence belongs to the chaperonin (HSP60) family. As to quaternary structure, forms a cylinder of 14 subunits composed of two heptameric rings stacked back-to-back. Interacts with the co-chaperonin GroES.

Its subcellular location is the cytoplasm. The enzyme catalyses ATP + H2O + a folded polypeptide = ADP + phosphate + an unfolded polypeptide.. Its function is as follows. Together with its co-chaperonin GroES, plays an essential role in assisting protein folding. The GroEL-GroES system forms a nano-cage that allows encapsulation of the non-native substrate proteins and provides a physical environment optimized to promote and accelerate protein folding. The protein is Chaperonin GroEL of Ectopseudomonas mendocina (strain ymp) (Pseudomonas mendocina).